The sequence spans 686 residues: Eomesodermin homolog (686 aa).

Residues 27–46 (GGSGGSAGHLPSAAPSPQKL) are disordered. Positions 34 to 43 (GHLPSAAPSP) are enriched in low complexity. S107 is modified (phosphoserine). A DNA-binding region (T-box) is located at residues 276 to 456 (LWLKFHRHQT…HNPFAKGFRD (181 aa)). The tract at residues 571–686 (AMAGWGGRGS…GGYYAFYTTP (116 aa)) is required for transcription activation. Residues 639–686 (ACKRRRLSPSNSSNENSPSIKCEDINAEEYSKDTSKGMGGYYAFYTTP) form a disordered region. Low complexity predominate over residues 646–657 (SPSNSSNENSPS). Basic and acidic residues predominate over residues 659-673 (KCEDINAEEYSKDTS).

Expressed in CD8+ T-cells.

It is found in the nucleus. Its function is as follows. Functions as a transcriptional activator playing a crucial role during development. Functions in trophoblast differentiation and later in gastrulation, regulating both mesoderm delamination and endoderm specification. Plays a role in brain development being required for the specification and the proliferation of the intermediate progenitor cells and their progeny in the cerebral cortex. Required for differentiation and migration of unipolar dendritic brush cells. Also involved in the differentiation of CD8+ T-cells during immune response regulating the expression of lytic effector genes. This Homo sapiens (Human) protein is Eomesodermin homolog (EOMES).